Here is a 386-residue protein sequence, read N- to C-terminus: Copper-containing nitrite reductase (386 aa).

Residues 1 to 18 form the signal peptide; sequence MKRQALAAIIASMFALAA. Cysteine 19 carries N-palmitoyl cysteine lipidation. Cysteine 19 is lipidated: S-diacylglycerol cysteine. Plastocyanin-like domains are found at residues 97–191 and 241–342; these read WTFD…ILVE and GHVG…LKVE. Residues histidine 130, histidine 135, histidine 170, cysteine 171, histidine 179, and methionine 184 each contribute to the Cu cation site. A substrate-binding site is contributed by histidine 135. Residue histidine 276 participates in substrate binding. Residue histidine 325 coordinates Cu cation. A disordered region spans residues 363-386; sequence GAAPAASAPAASAPAASAPAKSDY. The span at 364–386 shows a compositional bias: low complexity; it reads AAPAASAPAASAPAASAPAKSDY. 3 repeat units span residues 367-371, 372-376, and 377-381. The segment at 367–381 is 3 X 5 AA tandem repeats of A-A-S-A-P; that stretch reads AASAPAASAPAASAP.

It belongs to the multicopper oxidase family. As to quaternary structure, homotrimer. Requires Cu(+) as cofactor. The cofactor is Cu(2+).

It is found in the cell outer membrane. It carries out the reaction nitric oxide + Fe(III)-[cytochrome c] + H2O = Fe(II)-[cytochrome c] + nitrite + 2 H(+). Catalyzes the reduction of nitrite to nitric oxide (NO). It could be essential for growth and survival in oxygen-depleted environments. This Neisseria meningitidis serogroup A / serotype 4A (strain DSM 15465 / Z2491) protein is Copper-containing nitrite reductase (aniA).